We begin with the raw amino-acid sequence, 366 residues long: Chorismate synthase (366 aa).

Residues Arg48 and Arg54 each coordinate NADP(+). FMN is bound by residues 125–127 (RSS), 238–239 (NA), Gly278, 293–297 (KPTSS), and Arg319.

Belongs to the chorismate synthase family. In terms of assembly, homotetramer. Requires FMNH2 as cofactor.

It carries out the reaction 5-O-(1-carboxyvinyl)-3-phosphoshikimate = chorismate + phosphate. It functions in the pathway metabolic intermediate biosynthesis; chorismate biosynthesis; chorismate from D-erythrose 4-phosphate and phosphoenolpyruvate: step 7/7. In terms of biological role, catalyzes the anti-1,4-elimination of the C-3 phosphate and the C-6 proR hydrogen from 5-enolpyruvylshikimate-3-phosphate (EPSP) to yield chorismate, which is the branch point compound that serves as the starting substrate for the three terminal pathways of aromatic amino acid biosynthesis. This reaction introduces a second double bond into the aromatic ring system. In Neisseria meningitidis serogroup C / serotype 2a (strain ATCC 700532 / DSM 15464 / FAM18), this protein is Chorismate synthase.